A 300-amino-acid polypeptide reads, in one-letter code: Cation-efflux pump FieF (300 aa).

The next 4 helical transmembrane spans lie at 12-32 (AALAATALASILLLIKIVAWY), 40-60 (LAALVDSLVDIAASLTNLLVV), 82-102 (AALAQSMFISGSALFLFLTGF), and 114-134 (PGVGIAVTVVALFSTLLLVTY). Asp-45 and Asp-49 together coordinate Zn(2+). Residues His-153 and Asp-157 each contribute to the Zn(2+) site. 2 helical membrane passes run 155 to 175 (QSDVMMNGAILIALALSWYGF) and 178 to 198 (ADALFALAIGVYILYSALRMG).

It belongs to the cation diffusion facilitator (CDF) transporter (TC 2.A.4) family. FieF subfamily. Homodimer.

The protein resides in the cell inner membrane. It catalyses the reaction Zn(2+)(in) + H(+)(out) = Zn(2+)(out) + H(+)(in). The enzyme catalyses Cd(2+)(in) + H(+)(out) = Cd(2+)(out) + H(+)(in). The catalysed reaction is Fe(2+)(in) + H(+)(out) = Fe(2+)(out) + H(+)(in). Functionally, divalent metal cation transporter which exports Zn(2+), Cd(2+) and possibly Fe(2+). May be involved in zinc and iron detoxification by efflux. The chain is Cation-efflux pump FieF from Serratia proteamaculans (strain 568).